The chain runs to 181 residues: Adenine phosphoribosyltransferase (181 aa).

Belongs to the purine/pyrimidine phosphoribosyltransferase family. As to quaternary structure, homodimer.

It localises to the cytoplasm. The catalysed reaction is AMP + diphosphate = 5-phospho-alpha-D-ribose 1-diphosphate + adenine. It participates in purine metabolism; AMP biosynthesis via salvage pathway; AMP from adenine: step 1/1. Catalyzes a salvage reaction resulting in the formation of AMP, that is energically less costly than de novo synthesis. In Vibrio parahaemolyticus serotype O3:K6 (strain RIMD 2210633), this protein is Adenine phosphoribosyltransferase.